We begin with the raw amino-acid sequence, 319 residues long: MQILNFVAAEIEPPQTVLGKVYQHDSVLTEEVMAYLQPQGGGIFLDVTLGGGGHSLALLRGGAARVVGLDRDPAALQAAQARFAAEGIPGSRIQLWHLNFADFDLQQHGFRDEQGQGIPFDGIVADLGVSSPQLDCPERGFSFRGEGPLDMRMDPSAAQETAADWVNHRPVEELIEIFTRYGEERFARRIAHHIEQARPLATTTQLAQVVWQAVPPAARRGRIHPATRVFQALRIAVNRELEALETLLAQAPTWLKPGGRLAVISFHSLEDRLVKWAFRRDPRWQVLTPKPLSPSELERQRNPRARSAKLRVAARSSQM.

Residues 52-54, D70, F100, D126, and Q133 each bind S-adenosyl-L-methionine; that span reads GGH. The segment at 289–319 is disordered; sequence PKPLSPSELERQRNPRARSAKLRVAARSSQM.

It belongs to the methyltransferase superfamily. RsmH family.

The protein resides in the cytoplasm. It catalyses the reaction cytidine(1402) in 16S rRNA + S-adenosyl-L-methionine = N(4)-methylcytidine(1402) in 16S rRNA + S-adenosyl-L-homocysteine + H(+). Its function is as follows. Specifically methylates the N4 position of cytidine in position 1402 (C1402) of 16S rRNA. This chain is Ribosomal RNA small subunit methyltransferase H, found in Synechococcus sp. (strain JA-2-3B'a(2-13)) (Cyanobacteria bacterium Yellowstone B-Prime).